The following is a 223-amino-acid chain: Serine/threonine/tyrosine-interacting protein (223 aa).

Residues 28-176 (EMQEILPGLF…LQEYEAIYLA (149 aa)) form the Tyrosine-protein phosphatase domain. The Interaction with FBXW7 motif lies at 76–78 (FQQ). 3 positions are modified to phosphoserine: S184, S193, and S201. Positions 197-223 (GTTGSLKRTHEEEDDFGTMQVATAQNG) are disordered.

The protein belongs to the protein-tyrosine phosphatase family. Non-receptor class subfamily. As to quaternary structure, interacts with MAPK1; independently of MAPK1 phosphorylation status. Interacts with CARHSP1/Crhsp-24. Interacts (via FQQ motif) with FBXW7 (via F-box domain); the interaction is direct and prevents FBXW7 interaction with SKP1, a component of the SCF(FBXW7) complex.

It localises to the nucleus. Its subcellular location is the cytoplasm. The protein localises to the cytosol. Catalytically inactive phosphatase. Acts as a nuclear anchor for MAPK1/MAPK3 (ERK1/ERK2). Modulates cell-fate decisions and cell migration by spatiotemporal regulation of MAPK1/MAPK3 (ERK1/ERK2). By binding to the F-box of FBXW7, prevents the assembly of FBXW7 into the SCF E3 ubiquitin-protein ligase complex, and thereby inhibits degradation of its substrates. Plays a role in spermatogenesis. The polypeptide is Serine/threonine/tyrosine-interacting protein (STYX) (Pongo abelii (Sumatran orangutan)).